The sequence spans 413 residues: Ureide permease 5 (413 aa).

Residues 1-18 are Extracellular-facing; the sequence is MMIAQELGIYVVESKGGA. Residues 19 to 39 traverse the membrane as a helical segment; sequence ILCLLLSLLCLGTWPALMALL. The Cytoplasmic segment spans residues 40 to 50; it reads ERRGRLPQHTY. Residues 51-71 traverse the membrane as a helical segment; it reads LDYSITNFLAAIFIAFVFGGI. Topologically, residues 72-91 are extracellular; it reads GESTHEAPSFITQLTQIQDN. A helical transmembrane segment spans residues 92–112; the sequence is WPSVLFAMAGGVGLSIGNLAT. Residues 113–115 are Cytoplasmic-facing; it reads QYS. Residues 116-136 traverse the membrane as a helical segment; sequence LAFVGLSVTEVTAASITVVVG. Topologically, residues 137–149 are extracellular; that stretch reads TTVNYFLDNGLNR. A helical membrane pass occupies residues 150–170; sequence ADILFSGVGCFMVAVCLGSAV. At 171 to 240 the chain is on the cytoplasmic side; the sequence is HSSNSADIKA…RAIKVLGKSM (70 aa). 232–239 lines the ATP pocket; sequence AIKVLGKS. Residues 241-261 traverse the membrane as a helical segment; sequence VVGLGITFFAGLSFSLFSPLF. Residues 262-278 are Extracellular-facing; it reads NLATNDQWHTLKQGVPK. The helical transmembrane segment at 279–299 threads the bilayer; it reads LIVYTAFFYFSLSCFVIAVAL. Residues 300–326 lie on the Cytoplasmic side of the membrane; it reads NISFLYKPVLDSPRSSFREYLSDWNGR. The chain crosses the membrane as a helical span at residues 327–347; sequence GWALAAGLLCGFGNGLQFMGG. Topologically, residues 348–352 are extracellular; it reads QAAGY. A helical membrane pass occupies residues 353-373; that stretch reads AASDAVQALPLVSTFWGIYLF. Over 374–384 the chain is Cytoplasmic; it reads GEYRRSSTRTY. A helical membrane pass occupies residues 385–405; the sequence is ALLVGMLVMFTVAVGLLMASA. Over 406-413 the chain is Extracellular; it reads GERETRFT.

The protein belongs to the plant ureide permease (TC 2.A.7.19) family. In terms of tissue distribution, expressed in lateral roots, rosette leaves, stems, stipules, flower stigma, pedicels and the connective tissue between pollen sacks.

It is found in the membrane. Proton-coupled transporter that transports a wide spectrum of oxo derivatives of heterocyclic nitrogen compounds, including allantoin, uric acid and xanthine, but not adenine. Mediates transport of uracil and 5-fluorouracil (a toxic uracil analog). Functionally, proton-coupled transporter that transports a wide spectrum of oxo derivatives of heterocyclic nitrogen compounds, including allantoin, xanthine and uracil. The protein is Ureide permease 5 of Arabidopsis thaliana (Mouse-ear cress).